The following is a 617-amino-acid chain: Sodium-coupled monocarboxylate transporter 2 (617 aa).

The Extracellular portion of the chain corresponds to 1 to 5; the sequence is MEVKN. Residues 6–26 form a helical membrane-spanning segment; that stretch reads FAVWDYVVFAALFIISSGIGV. The Cytoplasmic segment spans residues 27-47; sequence FYAIKERKKATSREFLVGGRQ. A helical transmembrane segment spans residues 48–68; it reads MSFGPVALSLTASFMSAVTVL. Residues 69–80 lie on the Extracellular side of the membrane; sequence GTPADVYRFGAS. Residues 81–101 traverse the membrane as a helical segment; that stretch reads FVLFFITYGLVIILTSELFLP. Residues 102–128 are Cytoplasmic-facing; sequence VFYRSGITSTYEYLQLRFNKPVRYAAT. A helical transmembrane segment spans residues 129–149; it reads VIYIVQTILYTGVVVYAPALA. Residues 150 to 157 lie on the Extracellular side of the membrane; it reads LNQVTGFD. Residues 158-178 form a helical membrane-spanning segment; that stretch reads LWGSVFATGIVCTFYCTLGGL. At 179–180 the chain is on the cytoplasmic side; the sequence is KA. The chain crosses the membrane as a helical span at residues 181–201; that stretch reads VVWTDAFQMVVMIVGFLTVLI. At 202–235 the chain is on the extracellular side; sequence QGSTYAGGLHNVLEQAENGSRLNIFDFDIDPLRR. Residue N219 is glycosylated (N-linked (GlcNAc...) asparagine). A helical membrane pass occupies residues 236-256; sequence HTFWTISVGGTFTWLGIYGVN. The Cytoplasmic portion of the chain corresponds to 257 to 273; sequence QSTIQRCISCKTEKHAK. Residues 274–294 traverse the membrane as a helical segment; the sequence is LALYFNLLGLWIILLCAVFSG. The Extracellular segment spans residues 295–334; sequence LTMYAHFKDCDPWTSGIISAPDQLMPYFVMELFSTMPGLP. Residues 335–357 form a helical membrane-spanning segment; that stretch reads GLFVACAFSGTLSTVAASINALA. At 358-385 the chain is on the cytoplasmic side; the sequence is TVTFEDFVKSCFPRLSDKLSTWISKGLC. The helical transmembrane segment at 386-406 threads the bilayer; it reads LLFGVICTSTAVAASLMGGVI. The Extracellular segment spans residues 407-411; sequence QAALS. A helical membrane pass occupies residues 412 to 432; that stretch reads IHGMCGGPMLGLFSLGILFPF. Residues 433–437 lie on the Cytoplasmic side of the membrane; it reads VNWKG. The helical transmembrane segment at 438-458 threads the bilayer; the sequence is ALAGLLTGILLSFWVAIGAFI. Over 459 to 507 the chain is Extracellular; it reads YPAPASKTWPLPLSTDQCGLSNVTESVPPVLSSRPAIAETWYALSYLHY. N480 carries an N-linked (GlcNAc...) asparagine glycan. The chain crosses the membrane as a helical span at residues 508-528; the sequence is STVGCLGCIAAGVIISFLTGL. Residues 529 to 617 lie on the Cytoplasmic side of the membrane; that stretch reads QKGKDIPPLL…NMALEKITHF (89 aa).

The protein belongs to the sodium:solute symporter (SSF) (TC 2.A.21) family.

It is found in the apical cell membrane. It catalyses the reaction (S)-lactate(out) + Na(+)(out) = (S)-lactate(in) + Na(+)(in). It carries out the reaction nicotinate(out) + Na(+)(out) = nicotinate(in) + Na(+)(in). The enzyme catalyses pyruvate(out) + Na(+)(out) = pyruvate(in) + Na(+)(in). The catalysed reaction is propanoate(out) + Na(+)(out) = propanoate(in) + Na(+)(in). It catalyses the reaction butanoate(out) + Na(+)(out) = butanoate(in) + Na(+)(in). It carries out the reaction acetoacetate(out) + Na(+)(out) = acetoacetate(in) + Na(+)(in). In terms of biological role, acts as an electroneutral and low-affinity sodium (Na(+))-dependent sodium-coupled solute transporter. Catalyzes the transport across the plasma membrane of many monocarboxylates such as lactate, pyruvate, nicotinate, propionate, butyrate and beta-D-hydroxybutyrate. May be responsible for the first step of reabsorption of monocarboxylates from the lumen of the proximal tubule of the kidney and the small intestine. May play also a role in monocarboxylates transport in the retina. Mediates electroneutral uptake of lactate, with a stoichiometry of 2 Na(+) for each lactate. This Bos taurus (Bovine) protein is Sodium-coupled monocarboxylate transporter 2 (SLC5A12).